The primary structure comprises 700 residues: Hedgehog-interacting protein (700 aa).

An N-terminal signal peptide occupies residues 1-17 (MLKMLSFKLLLLAVALG). N-linked (GlcNAc...) asparagine glycosylation is present at Asn-99. Intrachain disulfides connect Cys-216/Cys-536, Cys-218/Cys-543, Cys-402/Cys-624, Cys-435/Cys-452, Cys-500/Cys-594, Cys-612/Cys-623, Cys-625/Cys-634, Cys-639/Cys-649, Cys-643/Cys-655, and Cys-657/Cys-666. The segment at 376–388 (LDDMEEMDGLSDF) is interaction with SHH zinc binding site. Asp-383 contributes to the Zn(2+) binding site. Asn-416, Asn-447, and Asn-459 each carry an N-linked (GlcNAc...) asparagine glycan. EGF-like domains lie at 607 to 634 (DCSRLCRNGYYTPTGKCCCSPGWEGDFC) and 635 to 667 (RIAKCEPACRHGGVCVRPNKCLCKKGYLGPQCE).

This sequence belongs to the HHIP family. As to quaternary structure, interacts with all three hedgehog family members, SHH, IHH and DHH. As to expression, in the adult brain, high expression found in the ventral cochlear nucleus, medial habenula, indusium griseum and tenia tecta. Some expression also in the caudate putamen, the nucleus accumbens, the ventral pallidum and in the superficial layers of the superior colliculus.

Its subcellular location is the cell membrane. It is found in the secreted. In terms of biological role, modulates hedgehog signaling in several cell types, including brain and lung through direct interaction with members of the hedgehog family. Soluble forms inhibit Shh-induced differentiation in the fibroblast cell line C3H/10T1/2. The protein is Hedgehog-interacting protein (Hhip) of Mus musculus (Mouse).